A 116-amino-acid chain; its full sequence is Nicotine metabolites export pump subunit NepA (116 aa).

4 consecutive transmembrane segments (helical) span residues 10-30 (LTIW…TSLL), 42-62 (TVAV…ILKF), 67-87 (IAYA…GVLF), and 92-112 (FSWK…TLNL).

Belongs to the drug/metabolite transporter (DMT) superfamily. Small multidrug resistance (SMR) (TC 2.A.7.1) family. NepA/NepB subfamily. As to quaternary structure, the efflux pump is composed of NepA and NepB.

The protein resides in the cell membrane. Functionally, component of an efflux pump responsible for the transport of nicotine breakdown products, in particular methylamine, out of the cell. This pump apparently serves as a metabolic valve for nicotine catabolites and may protect the bacteria from the potentially toxic side effects of these compounds. The chain is Nicotine metabolites export pump subunit NepA (nepA) from Paenarthrobacter nicotinovorans (Arthrobacter nicotinovorans).